The following is a 1035-amino-acid chain: DNA polymerase catalytic subunit (1035 aa).

This sequence belongs to the DNA polymerase type-B family.

It is found in the host nucleus. It catalyses the reaction DNA(n) + a 2'-deoxyribonucleoside 5'-triphosphate = DNA(n+1) + diphosphate. The chain is DNA polymerase catalytic subunit (UL54) from Macaca mulatta (Rhesus macaque).